Here is a 438-residue protein sequence, read N- to C-terminus: Aspartate aminotransferase, cytoplasmic (438 aa).

L-aspartate is bound by residues glycine 73, tryptophan 167, and asparagine 220. Position 284 is an N6-(pyridoxal phosphate)lysine (lysine 284). Arginine 412 serves as a coordination point for L-aspartate.

This sequence belongs to the class-I pyridoxal-phosphate-dependent aminotransferase family. Homodimer. The cofactor is pyridoxal 5'-phosphate.

It is found in the cytoplasm. It carries out the reaction L-aspartate + 2-oxoglutarate = oxaloacetate + L-glutamate. Plays a key role in amino acid metabolism. This is Aspartate aminotransferase, cytoplasmic (aatB) from Dictyostelium discoideum (Social amoeba).